Reading from the N-terminus, the 417-residue chain is Senescence-associated protein AAF, chloroplastic (417 aa).

The transit peptide at 1–36 (MALNVSKVVPNSPILVKSVNASRSRRVLLAYVHHPL) directs the protein to the chloroplast.

Belongs to the ATA15/OSA15 family. Expressed in leaves. Expressed in 7-day-old seedlings, roots, rosette leaves, cauline leaves and flower buds.

Its subcellular location is the plastid. It localises to the chloroplast. Involved in modulation of redox homeostasis to regulate leaf senescence mediated by age and stress factors during plant development. Its function is dependent of EIN2, a central factor of ethylene signaling. The chain is Senescence-associated protein AAF, chloroplastic from Arabidopsis thaliana (Mouse-ear cress).